Here is a 283-residue protein sequence, read N- to C-terminus: Flagellar filament 35 kDa core protein (283 aa).

Belongs to the bacterial flagellin family. In terms of assembly, the flagellum consists of two outer layers around a core that contains several antigenically related polypeptides.

Its subcellular location is the periplasmic flagellum. The protein resides in the periplasm. In terms of biological role, component of the core of the flagella. The sequence is that of Flagellar filament 35 kDa core protein (flaB) from Leptospira interrogans serogroup Icterohaemorrhagiae serovar Lai (strain 56601).